We begin with the raw amino-acid sequence, 278 residues long: HTH-type transcriptional activator RhaS (278 aa).

An HTH araC/xylS-type domain is found at 174-272; the sequence is NQLMAWLEDH…NWSPRDIRQG (99 aa). DNA-binding regions (H-T-H motif) lie at residues 191-212 and 239-262; these read EAVA…KQHT and VTEI…RREF.

As to quaternary structure, binds DNA as a dimer.

Its subcellular location is the cytoplasm. In terms of biological role, activates expression of the rhaBAD and rhaT operons. This is HTH-type transcriptional activator RhaS from Salmonella heidelberg (strain SL476).